The following is a 185-amino-acid chain: Ribosome-recycling factor (185 aa).

This sequence belongs to the RRF family.

It localises to the cytoplasm. Its function is as follows. Responsible for the release of ribosomes from messenger RNA at the termination of protein biosynthesis. May increase the efficiency of translation by recycling ribosomes from one round of translation to another. This is Ribosome-recycling factor from Xylella fastidiosa (strain Temecula1 / ATCC 700964).